The following is a 305-amino-acid chain: Ribosomal RNA small subunit methyltransferase H (305 aa).

S-adenosyl-L-methionine is bound by residues 30-32 (GGH), D49, F74, D96, and Q103.

Belongs to the methyltransferase superfamily. RsmH family.

Its subcellular location is the cytoplasm. The enzyme catalyses cytidine(1402) in 16S rRNA + S-adenosyl-L-methionine = N(4)-methylcytidine(1402) in 16S rRNA + S-adenosyl-L-homocysteine + H(+). In terms of biological role, specifically methylates the N4 position of cytidine in position 1402 (C1402) of 16S rRNA. In Francisella tularensis subsp. tularensis (strain FSC 198), this protein is Ribosomal RNA small subunit methyltransferase H.